A 553-amino-acid chain; its full sequence is Coiled-coil domain-containing protein 22 homolog (553 aa).

Coiled-coil stretches lie at residues Leu-261–Gln-404 and Asn-498–Ala-553.

This sequence belongs to the CCDC22 family.

The chain is Coiled-coil domain-containing protein 22 homolog from Drosophila pseudoobscura pseudoobscura (Fruit fly).